The sequence spans 476 residues: Probable coniferyl aldehyde dehydrogenase (476 aa).

Catalysis depends on residues glutamate 225 and cysteine 259.

It belongs to the aldehyde dehydrogenase family. In terms of assembly, homodimer.

The enzyme catalyses (E)-coniferaldehyde + NADP(+) + H2O = (E)-ferulate + NADPH + 2 H(+). The catalysed reaction is (E)-coniferaldehyde + NAD(+) + H2O = (E)-ferulate + NADH + 2 H(+). The sequence is that of Probable coniferyl aldehyde dehydrogenase (calB) from Pseudomonas aeruginosa (strain ATCC 15692 / DSM 22644 / CIP 104116 / JCM 14847 / LMG 12228 / 1C / PRS 101 / PAO1).